Reading from the N-terminus, the 459-residue chain is Methionine aminopeptidase 2-2 (459 aa).

The segment covering 1–12 (MGSKSPEDHRQG) has biased composition (basic and acidic residues). The tract at residues 1-87 (MGSKSPEDHR…KKLSVVQQTS (87 aa)) is disordered. A compositionally biased stretch (acidic residues) spans 43–54 (GQDEDGDDDDDE). Positions 55–66 (KTGIDLKTNDGA) are enriched in basic and acidic residues. Residues 67 to 79 (KKKRKRNKKKSKK) are compositionally biased toward basic residues. Position 210 (histidine 210) interacts with substrate. A divalent metal cation-binding residues include aspartate 231, aspartate 242, and histidine 311. Residue histidine 319 participates in substrate binding. A divalent metal cation contacts are provided by glutamate 344 and glutamate 440.

It belongs to the peptidase M24A family. Methionine aminopeptidase eukaryotic type 2 subfamily. Co(2+) serves as cofactor. It depends on Zn(2+) as a cofactor. The cofactor is Mn(2+). Requires Fe(2+) as cofactor.

The protein resides in the cytoplasm. The enzyme catalyses Release of N-terminal amino acids, preferentially methionine, from peptides and arylamides.. Its function is as follows. Cotranslationally removes the N-terminal methionine from nascent proteins. The N-terminal methionine is often cleaved when the second residue in the primary sequence is small and uncharged (Met-Ala-, Cys, Gly, Pro, Ser, Thr, or Val). The polypeptide is Methionine aminopeptidase 2-2 (Pyrenophora teres f. teres (strain 0-1) (Barley net blotch fungus)).